The sequence spans 84 residues: Large ribosomal subunit protein bL27 (84 aa).

The tract at residues M1–L21 is disordered.

The protein belongs to the bacterial ribosomal protein bL27 family.

In Chlorobium phaeovibrioides (strain DSM 265 / 1930) (Prosthecochloris vibrioformis (strain DSM 265)), this protein is Large ribosomal subunit protein bL27.